The primary structure comprises 325 residues: tRNA N6-adenosine threonylcarbamoyltransferase (325 aa).

Fe cation is bound by residues His-110 and His-114. Substrate is bound by residues 133-137 (MVSGG), Asp-165, Gly-178, and Asn-268. Residue Asp-296 participates in Fe cation binding.

This sequence belongs to the KAE1 / TsaD family. It depends on Fe(2+) as a cofactor.

The protein localises to the cytoplasm. It carries out the reaction L-threonylcarbamoyladenylate + adenosine(37) in tRNA = N(6)-L-threonylcarbamoyladenosine(37) in tRNA + AMP + H(+). In terms of biological role, required for the formation of a threonylcarbamoyl group on adenosine at position 37 (t(6)A37) in tRNAs that read codons beginning with adenine. Is involved in the transfer of the threonylcarbamoyl moiety of threonylcarbamoyl-AMP (TC-AMP) to the N6 group of A37, together with TsaE and TsaB. TsaD likely plays a direct catalytic role in this reaction. This is tRNA N6-adenosine threonylcarbamoyltransferase from Thermosipho melanesiensis (strain DSM 12029 / CIP 104789 / BI429).